Reading from the N-terminus, the 189-residue chain is Pyridoxal 5'-phosphate synthase subunit PdxT (189 aa).

Gly48 to Ser50 lines the L-glutamine pocket. The active-site Nucleophile is the Cys80. Residues Arg107 and Ile136–Arg137 contribute to the L-glutamine site. Residues His172 and Glu174 each act as charge relay system in the active site.

The protein belongs to the glutaminase PdxT/SNO family. As to quaternary structure, in the presence of PdxS, forms a dodecamer of heterodimers. Only shows activity in the heterodimer.

The enzyme catalyses aldehydo-D-ribose 5-phosphate + D-glyceraldehyde 3-phosphate + L-glutamine = pyridoxal 5'-phosphate + L-glutamate + phosphate + 3 H2O + H(+). It carries out the reaction L-glutamine + H2O = L-glutamate + NH4(+). It functions in the pathway cofactor biosynthesis; pyridoxal 5'-phosphate biosynthesis. In terms of biological role, catalyzes the hydrolysis of glutamine to glutamate and ammonia as part of the biosynthesis of pyridoxal 5'-phosphate. The resulting ammonia molecule is channeled to the active site of PdxS. This chain is Pyridoxal 5'-phosphate synthase subunit PdxT, found in Ruminiclostridium cellulolyticum (strain ATCC 35319 / DSM 5812 / JCM 6584 / H10) (Clostridium cellulolyticum).